Consider the following 196-residue polypeptide: MGLLDGEAWEKENPPVQATGCIACLEKDDRYPHTCNKGANDMTEREQEMIIKLIDNNEGRPDDLNGCGILCSNVPCHLCPANNDQKITLGEIRAMDPRKPHLNKPEVTPTDDQPSAETIEGVTKPSHYMLFDDIEAIEVIARSMTVEQFKGYCFGNILKYRLRAGKKSELAYLEKDLAKADFYKELFEKHKDKCYA.

The segment at 97 to 118 is disordered; it reads PRKPHLNKPEVTPTDDQPSAET.

Dodecamer.

The catalysed reaction is dGMP + ATP = dGDP + ADP. It catalyses the reaction dTMP + ATP = dTDP + ADP. In terms of biological role, nucleotide kinase that catalyzes the phosphorylation of dGMP and dTMP to dGDP and dTDP. A double mutation in this protein and the RecBCD inhibitor gp5.9 protein allow phage to overcome the retron Ec48 bacteriophage defense system. This protein alone when overexpressed in E.coli does not cause growth arrest; Y128C may be a silent mutation. The chain is Nucleotide kinase gp1.7 from Escherichia coli (Bacteriophage T7).